A 126-amino-acid chain; its full sequence is Cystatin-C (126 aa).

Residues 1-18 (MKMLVFPVLAALFAVGLG) form the signal peptide. One can recognise a Cystatin domain in the interval 22 to 115 (GAPRDINISE…CTFSVWSRPW (94 aa)). The Secondary area of contact signature appears at 64–68 (QVVSG). Cystine bridges form between C82–C92 and C106–C126.

Belongs to the cystatin family. Ubiquitously expressed in normal tissues including brain, eye, gill, heart, gullet, liver, spleen, stomach, pyloric ceca, intestine, kidney and muscle. Expressed, but not up-regulated, in lipopolysaccharide (LPS)-stimulated tissues including kidney, spleen, muscle and gill.

The protein resides in the secreted. In terms of biological role, thiol protease inhibitor. Has high papain inhibitory activity and inhibits to a lesser extent fish cathepsins L, S, K, F, X and bovine cathepsin B in vitro. In Paralichthys olivaceus (Bastard halibut), this protein is Cystatin-C.